A 461-amino-acid polypeptide reads, in one-letter code: Elongation factor 1-alpha, oocyte form (461 aa).

Position 2 is a n,N,N-trimethylglycine (Gly2). One can recognise a tr-type G domain in the interval Lys5–Thr242. The G1 stretch occupies residues Gly14–Ser21. Gly14–Ser21 contacts GTP. Residues Gly70–Asp74 form a G2 region. A G3 region spans residues Asp91–Gly94. Residues Asp91 to His95 and Asn153 to Asp156 contribute to the GTP site. The segment at Asn153–Asp156 is G4. The tract at residues Ser194 to Trp196 is G5. 5-glutamyl glycerylphosphorylethanolamine occurs at positions 301 and 374.

Belongs to the TRAFAC class translation factor GTPase superfamily. Classic translation factor GTPase family. EF-Tu/EF-1A subfamily. Oocyte.

The protein resides in the cytoplasm. Functionally, this protein promotes the GTP-dependent binding of aminoacyl-tRNA to the A-site of ribosomes during protein biosynthesis. This chain is Elongation factor 1-alpha, oocyte form (eef1ao), found in Xenopus laevis (African clawed frog).